The chain runs to 486 residues: Protein nucleotidyltransferase YdiU (486 aa).

Positions 90, 92, 93, 113, 125, 126, 176, and 183 each coordinate ATP. Asp-252 serves as the catalytic Proton acceptor. Asn-253 and Asp-262 together coordinate Mg(2+). Asp-262 serves as a coordination point for ATP.

Belongs to the SELO family. Mg(2+) is required as a cofactor. Mn(2+) serves as cofactor.

The enzyme catalyses L-seryl-[protein] + ATP = 3-O-(5'-adenylyl)-L-seryl-[protein] + diphosphate. The catalysed reaction is L-threonyl-[protein] + ATP = 3-O-(5'-adenylyl)-L-threonyl-[protein] + diphosphate. It carries out the reaction L-tyrosyl-[protein] + ATP = O-(5'-adenylyl)-L-tyrosyl-[protein] + diphosphate. It catalyses the reaction L-histidyl-[protein] + UTP = N(tele)-(5'-uridylyl)-L-histidyl-[protein] + diphosphate. The enzyme catalyses L-seryl-[protein] + UTP = O-(5'-uridylyl)-L-seryl-[protein] + diphosphate. The catalysed reaction is L-tyrosyl-[protein] + UTP = O-(5'-uridylyl)-L-tyrosyl-[protein] + diphosphate. Functionally, nucleotidyltransferase involved in the post-translational modification of proteins. It can catalyze the addition of adenosine monophosphate (AMP) or uridine monophosphate (UMP) to a protein, resulting in modifications known as AMPylation and UMPylation. The sequence is that of Protein nucleotidyltransferase YdiU from Pseudomonas putida (strain ATCC 700007 / DSM 6899 / JCM 31910 / BCRC 17059 / LMG 24140 / F1).